Consider the following 266-residue polypeptide: Thiazole synthase (266 aa).

The active-site Schiff-base intermediate with DXP is K106. Residues G167, 193–194, and 215–216 contribute to the 1-deoxy-D-xylulose 5-phosphate site; these read AG and NT.

This sequence belongs to the ThiG family. In terms of assembly, homotetramer. Forms heterodimers with either ThiH or ThiS.

It localises to the plastid. The protein resides in the chloroplast. It catalyses the reaction [ThiS sulfur-carrier protein]-C-terminal-Gly-aminoethanethioate + 2-iminoacetate + 1-deoxy-D-xylulose 5-phosphate = [ThiS sulfur-carrier protein]-C-terminal Gly-Gly + 2-[(2R,5Z)-2-carboxy-4-methylthiazol-5(2H)-ylidene]ethyl phosphate + 2 H2O + H(+). It functions in the pathway cofactor biosynthesis; thiamine diphosphate biosynthesis. Its function is as follows. Catalyzes the rearrangement of 1-deoxy-D-xylulose 5-phosphate (DXP) to produce the thiazole phosphate moiety of thiamine. Sulfur is provided by the thiocarboxylate moiety of the carrier protein ThiS. In vitro, sulfur can be provided by H(2)S. The sequence is that of Thiazole synthase from Cyanidium caldarium (Red alga).